A 416-amino-acid polypeptide reads, in one-letter code: Pectin acetylesterase 3 (416 aa).

The N-terminal stretch at 1–25 is a signal peptide; sequence MKSVLRIAAAIFWLWLFIVLGVIGS. Residue Asn-131 is glycosylated (N-linked (GlcNAc...) asparagine). Active-site charge relay system residues include Ser-198 and Asp-294. Residue Asn-324 is glycosylated (N-linked (GlcNAc...) asparagine). His-361 functions as the Charge relay system in the catalytic mechanism.

It belongs to the pectinacetylesterase family.

The protein resides in the secreted. It is found in the cell wall. In terms of biological role, hydrolyzes acetyl esters in homogalacturonan regions of pectin. In type I primary cell wall, galacturonic acid residues of pectin can be acetylated at the O-2 and O-3 positions. Decreasing the degree of acetylation of pectin gels in vitro alters their physical properties. This is Pectin acetylesterase 3 from Arabidopsis thaliana (Mouse-ear cress).